A 66-amino-acid chain; its full sequence is Beta-toxin Cbo2 (66 aa).

The 66-residue stretch at 1–66 folds into the LCN-type CS-alpha/beta domain; sequence KEGYIVNYHD…VWPLPKKTCN (66 aa). Intrachain disulfides connect Cys12–Cys65, Cys16–Cys41, Cys25–Cys46, and Cys29–Cys48. At Asn66 the chain carries Asparagine amide.

The protein belongs to the long (4 C-C) scorpion toxin superfamily. Sodium channel inhibitor family. Beta subfamily. Expressed by the venom gland.

Its subcellular location is the secreted. In terms of biological role, beta toxins bind voltage-independently at site-4 of sodium channels and shift the voltage of activation toward more negative potentials thereby affecting sodium channel activation and promoting spontaneous and repetitive firing. A mixture of Cbo2 and Cbo3 is weakly active on the human voltage-gated sodium channels Nav1.4/SCN4A and Nav1.6/SCN8A when tested at 200 nM. In vivo, is toxic to mice when intraperitoneally injected. This is Beta-toxin Cbo2 from Centruroides bonito (Scorpion).